The chain runs to 476 residues: Aspartyl/glutamyl-tRNA(Asn/Gln) amidotransferase subunit B (476 aa).

This sequence belongs to the GatB/GatE family. GatB subfamily. In terms of assembly, heterotrimer of A, B and C subunits.

The catalysed reaction is L-glutamyl-tRNA(Gln) + L-glutamine + ATP + H2O = L-glutaminyl-tRNA(Gln) + L-glutamate + ADP + phosphate + H(+). It catalyses the reaction L-aspartyl-tRNA(Asn) + L-glutamine + ATP + H2O = L-asparaginyl-tRNA(Asn) + L-glutamate + ADP + phosphate + 2 H(+). Functionally, allows the formation of correctly charged Asn-tRNA(Asn) or Gln-tRNA(Gln) through the transamidation of misacylated Asp-tRNA(Asn) or Glu-tRNA(Gln) in organisms which lack either or both of asparaginyl-tRNA or glutaminyl-tRNA synthetases. The reaction takes place in the presence of glutamine and ATP through an activated phospho-Asp-tRNA(Asn) or phospho-Glu-tRNA(Gln). The protein is Aspartyl/glutamyl-tRNA(Asn/Gln) amidotransferase subunit B of Solidesulfovibrio magneticus (strain ATCC 700980 / DSM 13731 / RS-1) (Desulfovibrio magneticus).